The primary structure comprises 284 residues: D-tagatose-1,6-bisphosphate aldolase subunit GatY (284 aa).

Aspartate 82 functions as the Proton donor in the catalytic mechanism. Residues histidine 83 and histidine 180 each coordinate Zn(2+). Glycine 181 serves as a coordination point for dihydroxyacetone phosphate. Position 208 (histidine 208) interacts with Zn(2+). Residues 209 to 211 (GAS) and 230 to 233 (NVAT) each bind dihydroxyacetone phosphate.

It belongs to the class II fructose-bisphosphate aldolase family. TagBP aldolase GatY subfamily. As to quaternary structure, forms a complex with GatZ. It depends on Zn(2+) as a cofactor.

The catalysed reaction is D-tagatofuranose 1,6-bisphosphate = D-glyceraldehyde 3-phosphate + dihydroxyacetone phosphate. It participates in carbohydrate metabolism; D-tagatose 6-phosphate degradation; D-glyceraldehyde 3-phosphate and glycerone phosphate from D-tagatose 6-phosphate: step 2/2. Its function is as follows. Catalytic subunit of the tagatose-1,6-bisphosphate aldolase GatYZ, which catalyzes the reversible aldol condensation of dihydroxyacetone phosphate (DHAP or glycerone-phosphate) with glyceraldehyde 3-phosphate (G3P) to produce tagatose 1,6-bisphosphate (TBP). Requires GatZ subunit for full activity and stability. Is involved in the catabolism of galactitol. The chain is D-tagatose-1,6-bisphosphate aldolase subunit GatY from Salmonella enteritidis PT4 (strain P125109).